A 238-amino-acid polypeptide reads, in one-letter code: Uridylate kinase (238 aa).

12-15 (KLSG) contributes to the ATP binding site. Gly54 provides a ligand contact to UMP. ATP contacts are provided by Gly55 and Arg59. Residues Asp74 and 135 to 142 (TGNPYFTT) contribute to the UMP site. ATP-binding residues include Thr162, Tyr168, and Asp171.

It belongs to the UMP kinase family. In terms of assembly, homohexamer.

The protein resides in the cytoplasm. The catalysed reaction is UMP + ATP = UDP + ADP. Its pathway is pyrimidine metabolism; CTP biosynthesis via de novo pathway; UDP from UMP (UMPK route): step 1/1. Its activity is regulated as follows. Inhibited by UTP. Its function is as follows. Catalyzes the reversible phosphorylation of UMP to UDP. This is Uridylate kinase from Oleidesulfovibrio alaskensis (strain ATCC BAA-1058 / DSM 17464 / G20) (Desulfovibrio alaskensis).